A 230-amino-acid chain; its full sequence is Ureidoacrylate amidohydrolase RutB (230 aa).

Catalysis depends on aspartate 24, which acts as the Proton acceptor. Residue lysine 133 is part of the active site. Cysteine 166 acts as the Nucleophile in catalysis.

It belongs to the isochorismatase family. RutB subfamily.

The enzyme catalyses (Z)-3-ureidoacrylate + H2O + H(+) = (Z)-3-aminoacrylate + NH4(+) + CO2. It catalyses the reaction (Z)-3-ureidoacrylate + H2O = (Z)-3-aminoacrylate + carbamate + H(+). It carries out the reaction (Z)-2-methylureidoacrylate + H2O + H(+) = (Z)-2-methylaminoacrylate + NH4(+) + CO2. In terms of biological role, hydrolyzes ureidoacrylate to form aminoacrylate and carbamate. The carbamate hydrolyzes spontaneously, thereby releasing one of the nitrogen atoms of the pyrimidine ring as ammonia and one of its carbon atoms as CO2. The protein is Ureidoacrylate amidohydrolase RutB of Enterobacter sp. (strain 638).